We begin with the raw amino-acid sequence, 796 residues long: MANQVSNVINSMRLKRLQKQLVAVNRLSDQMRNCSDEALQAKTADFKQRLEKRETTLDKLLPEAYATIREASKRVLGMYPKDVQVMGAIVMHQGNIAEMQTGEGKTLTATMPLYLNALTGKSAFLITTNDYLANRDFQEMRPLYEWLGLTASLGFVDIPDYEYAENEKQMLYNHDIIYTTNGRLGFDYLFDNLADHINAKYLPELNFAIIDEVDSIILDAAQTPLVISGAPRVQSNLFHIIKMFVETLVEDEHFKLNVNKKEVWLTDEGIDVANHYFKVNNIYLPQYFDLVRVINLSLRAKYLFKDNLDYFIYNGEVVLIDRITGRMLPGTKLQSGLHQAIEAKEGVELSQDLSVMATITFQNLFKLFNGFSGMTGTGKLGEKEFFDLYSKLVVEIPTNHPIIRNDKEDRVYAKSDEKNKAILEKVKEIHATKQPVLLITRTAEAAEYFSTQLFKDNIPNNLLIAQNVAKEAQMIAEAGQLGAVTVSTSMAGRGTDIKLGSGVYELGGLAVIINEHMENSRVDRQLRGRSGRQGDPGVSQIYVSLDDYIVKRWSNSKLAENKKLKDVDPDKLQDSPFFRRRVRGIVSKAQRVSEETSMMAREMANEFEKSIGIQRDRVYEERNRILETSDFSAFDFDSLARDVFDYDLRTKHIHNKDDIINYIYEQLSFSFKDDAISQQIQTREQTIDYLVQQFNKQLKENMKIANNDYFKLRFFQKAILKAIDVEWINQVDQLQQLKASVNNRQNGQRNAIFEYHKVALETYEMMLINIKRATIRNLCLSILTFDKDQDLVVHFP.

ATP is bound by residues Gln-84, 102–106 (GEGKT), and Asp-496.

Belongs to the SecA family. Monomer and homodimer. Part of the essential Sec protein translocation apparatus which comprises SecA, SecYEG and auxiliary proteins SecDF. Other proteins may also be involved.

The protein localises to the cell membrane. The protein resides in the cytoplasm. It catalyses the reaction ATP + H2O + cellular proteinSide 1 = ADP + phosphate + cellular proteinSide 2.. Its function is as follows. Part of the Sec protein translocase complex. Interacts with the SecYEG preprotein conducting channel. Has a central role in coupling the hydrolysis of ATP to the transfer of proteins into and across the cell membrane, serving as an ATP-driven molecular motor driving the stepwise translocation of polypeptide chains across the membrane. This Staphylococcus haemolyticus (strain JCSC1435) protein is Protein translocase subunit SecA 2.